We begin with the raw amino-acid sequence, 330 residues long: Ribosomal RNA small subunit methyltransferase C (330 aa).

It belongs to the methyltransferase superfamily. RsmC family. In terms of assembly, monomer.

Its subcellular location is the cytoplasm. The enzyme catalyses guanosine(1207) in 16S rRNA + S-adenosyl-L-methionine = N(2)-methylguanosine(1207) in 16S rRNA + S-adenosyl-L-homocysteine + H(+). Functionally, specifically methylates the guanine in position 1207 of 16S rRNA in the 30S particle. This chain is Ribosomal RNA small subunit methyltransferase C, found in Haemophilus influenzae (strain 86-028NP).